Here is a 394-residue protein sequence, read N- to C-terminus: Phenylalanine 4-monooxygenase, chloroplastic (394 aa).

A chloroplast-targeting transit peptide spans 1 to 79 (MAMEVGYLRH…LNQIQAVSTA (79 aa)). The segment at 75 to 97 (AVSTAEKEREADKTSTPPIPSSI) is disordered. Positions 252, 257, and 297 each coordinate Fe cation.

Belongs to the biopterin-dependent aromatic amino acid hydroxylase family. Forms monomers. Fe(2+) is required as a cofactor.

The protein localises to the plastid. The protein resides in the chloroplast. It catalyses the reaction (6R)-L-erythro-5,6,7,8-tetrahydrobiopterin + L-phenylalanine + O2 = (4aS,6R)-4a-hydroxy-L-erythro-5,6,7,8-tetrahydrobiopterin + L-tyrosine. Its function is as follows. Catalyzes the hydroxylation of L-phenylalanine to L-tyrosine. Does not seem to be tetrahydropterin-dependent and shows preference for 10-formyltetrahydrofolate as cosubstrate and electron donor. This is Phenylalanine 4-monooxygenase, chloroplastic from Physcomitrium patens (Spreading-leaved earth moss).